A 762-amino-acid chain; its full sequence is 5-methyltetrahydropteroyltriglutamate--homocysteine methyltransferase (762 aa).

5-methyltetrahydropteroyltri-L-glutamate-binding positions include 17-20 (REWK) and lysine 111. Residues 435-437 (IGS) and glutamate 488 each bind L-homocysteine. L-methionine contacts are provided by residues 435-437 (IGS) and glutamate 488. Residues 519-520 (RC) and tryptophan 565 contribute to the 5-methyltetrahydropteroyltri-L-glutamate site. Residue aspartate 603 coordinates L-homocysteine. An L-methionine-binding site is contributed by aspartate 603. Glutamate 609 is a 5-methyltetrahydropteroyltri-L-glutamate binding site. Residues histidine 645, cysteine 647, and glutamate 669 each coordinate Zn(2+). Histidine 698 functions as the Proton donor in the catalytic mechanism. Cysteine 730 provides a ligand contact to Zn(2+).

It belongs to the vitamin-B12 independent methionine synthase family. It depends on Zn(2+) as a cofactor.

The enzyme catalyses 5-methyltetrahydropteroyltri-L-glutamate + L-homocysteine = tetrahydropteroyltri-L-glutamate + L-methionine. The protein operates within amino-acid biosynthesis; L-methionine biosynthesis via de novo pathway; L-methionine from L-homocysteine (MetE route): step 1/1. Functionally, catalyzes the transfer of a methyl group from 5-methyltetrahydrofolate to homocysteine resulting in methionine formation. This chain is 5-methyltetrahydropteroyltriglutamate--homocysteine methyltransferase, found in Bacillus cereus (strain ATCC 10987 / NRS 248).